We begin with the raw amino-acid sequence, 198 residues long: dTTP/UTP pyrophosphatase (198 aa).

The Proton acceptor role is filled by aspartate 72.

Belongs to the Maf family. YhdE subfamily. It depends on a divalent metal cation as a cofactor.

The protein localises to the cytoplasm. It carries out the reaction dTTP + H2O = dTMP + diphosphate + H(+). The enzyme catalyses UTP + H2O = UMP + diphosphate + H(+). Functionally, nucleoside triphosphate pyrophosphatase that hydrolyzes dTTP and UTP. May have a dual role in cell division arrest and in preventing the incorporation of modified nucleotides into cellular nucleic acids. This Pseudomonas fluorescens (strain Pf0-1) protein is dTTP/UTP pyrophosphatase.